We begin with the raw amino-acid sequence, 471 residues long: Desmin (471 aa).

Residues 2–109 form a head region; that stretch reads SQAYSSSQRV…QEFLTTRTNE (108 aa). S7 carries the phosphoserine; by CDK1 modification. The residue at position 12 (S12) is a Phosphoserine; by AURKB. At R16 the chain carries Omega-N-methylarginine. The residue at position 17 (T17) is a Phosphothreonine; by AURKB and ROCK1. S28 is modified (phosphoserine; by CDK1). S31 carries the phosphoserine modification. S32 carries the post-translational modification Phosphoserine; by CDK1. Position 37 is an asymmetric dimethylarginine; alternate (R37). Position 37 is an omega-N-methylarginine; alternate (R37). S45 is modified (phosphoserine). At R58 the chain carries ADP-ribosylarginine. Residue S60 is modified to Phosphoserine; by AURKB. R70 is subject to Omega-N-methylarginine. T77 bears the Phosphothreonine; by ROCK1 mark. S81 is subject to Phosphoserine. In terms of domain architecture, IF rod spans 109–417; it reads EKVELQELND…KLLEGEESRI (309 aa). The tract at residues 110 to 142 is coil 1A; sequence KVELQELNDRFANYIEKVRFLEQQNAALAAEVN. Residues 143-152 are linker 1; the sequence is RLKGREPTRV. Residues 153–253 are coil 1B; sequence AEIYEEELRE…HEEEIRELQA (101 aa). Residues 254 to 269 are linker 12; the sequence is QLQEQQVQVEMDMSKP. The interaction with NEB stretch occupies residues 269-416; that stretch reads PDLTAALRDI…RKLLEGEESR (148 aa). Residues 270 to 288 are coil 2A; that stretch reads DLTAALRDIRAQYETIAAK. A linker 2 region spans residues 289–296; that stretch reads NISEAEEW. S291, S359, S362, and S425 each carry phosphoserine. A coil 2B region spans residues 297–413; that stretch reads YKSKVSDLTQ…ATYRKLLEGE (117 aa). The tract at residues 414 to 471 is tail; the sequence is ESRINLPIQTFSALNFRETSPEQRGSEVHTKKTVMIKTIETRDGEVVSEATQQQHEVL. Residues 439-454 are interaction with CRYAB; sequence SEVHTKKTVMIKTIET.

This sequence belongs to the intermediate filament family. As to quaternary structure, homomer. Interacts with DST. Interacts with MTM1. Interacts with EPPK1; interaction is dependent of higher-order structure of intermediate filament. Interacts with CRYAB. Interacts with NEB (via nebulin repeats 160-164). Interacts (via rod region) with NEBL (via nebulin repeats 1-5). Interacts with ASB2; the interaction targets DES for proteasomal degradation. Interacts with PKP1. Interacts with FLII. Post-translationally, ADP-ribosylation prevents ability to form intermediate filaments. In terms of processing, phosphorylation at Ser-7, Ser-28 and Ser-32 by CDK1 and phosphorylation at Ser-60 by AURKB contribute to efficient separation of desmin intermediate filaments during mitosis. Ubiquitination by a SCF-like complex containing ASB2 leads to proteasomal degradation.

The protein resides in the cytoplasm. The protein localises to the myofibril. Its subcellular location is the sarcomere. It is found in the z line. It localises to the cell membrane. The protein resides in the sarcolemma. The protein localises to the nucleus. Its subcellular location is the cell tip. It is found in the nucleus envelope. Muscle-specific type III intermediate filament essential for proper muscular structure and function. Plays a crucial role in maintaining the structure of sarcomeres, inter-connecting the Z-disks and forming the myofibrils, linking them not only to the sarcolemmal cytoskeleton, but also to the nucleus and mitochondria, thus providing strength for the muscle fiber during activity. In adult striated muscle they form a fibrous network connecting myofibrils to each other and to the plasma membrane from the periphery of the Z-line structures. May act as a sarcomeric microtubule-anchoring protein: specifically associates with detyrosinated tubulin-alpha chains, leading to buckled microtubules and mechanical resistance to contraction. Required for nuclear membrane integrity, via anchoring at the cell tip and nuclear envelope, resulting in maintenance of microtubule-derived intracellular mechanical forces. Contributes to the transcriptional regulation of the NKX2-5 gene in cardiac progenitor cells during a short period of cardiomyogenesis and in cardiac side population stem cells in the adult. Plays a role in maintaining an optimal conformation of nebulette (NEB) on heart muscle sarcomeres to bind and recruit cardiac alpha-actin. The protein is Desmin (DES) of Sus scrofa (Pig).